Reading from the N-terminus, the 102-residue chain is Cytochrome c3 (102 aa).

H26, H29, C34, C37, H38, H39, C50, C55, H56, H73, C81, C84, H85, C95, C98, and H99 together coordinate heme c.

It depends on heme as a cofactor.

The protein resides in the periplasm. In terms of biological role, participates in sulfate respiration coupled with phosphorylation by transferring electrons from the enzyme dehydrogenase to ferredoxin. In Desulfovibrio desulfuricans, this protein is Cytochrome c3.